We begin with the raw amino-acid sequence, 698 residues long: Probable xyloglucan glycosyltransferase 2 (698 aa).

A run of 2 helical transmembrane segments spans residues Gly-124–Trp-144 and Ile-190–Ile-210. Residue Asp-272 is part of the active site. Asp-331 and Asp-333 together coordinate substrate. Asp-425 is a catalytic residue. The next 4 helical transmembrane spans lie at Leu-503–Val-523, Leu-528–Ser-548, Leu-653–Leu-668, and Ile-673–Ile-693.

The protein belongs to the glycosyltransferase 2 family. Plant cellulose synthase-like C subfamily.

The protein resides in the golgi apparatus membrane. Probable beta-1,4-glucan synthase rather involved in the synthesis of the xyloglucan backbone than cellulose. Seems to work simultaneously with xyloglucan 6-xylosyltransferase. Xyloglucan is a noncellulosic polysaccharides of plant cell wall and consists of a glucan backbone substituted by xylose, galactose and fucose. The sequence is that of Probable xyloglucan glycosyltransferase 2 (CSLC2) from Oryza sativa subsp. japonica (Rice).